The sequence spans 457 residues: Glycerol-3-phosphate acyltransferase 3 (457 aa).

A helical membrane pass occupies residues 14–34; that stretch reads WLTLVGSLILLPSAFGLSLGI. Phosphoserine is present on residues S68 and S77. 2 helical membrane-spanning segments follow: residues 137–157 and 161–181; these read ISPK…CFLL and VTLA…VGQL. The HXXXXD motif motif lies at 229–234; that stretch reads HTSPID. A disordered region spans residues 429-457; the sequence is GNGSPSLALDSSTVDNHGSPEPAFRSESL. Residues 431 to 444 show a composition bias toward polar residues; the sequence is GSPSLALDSSTVDN.

It belongs to the 1-acyl-sn-glycerol-3-phosphate acyltransferase family.

It localises to the endoplasmic reticulum membrane. The catalysed reaction is sn-glycerol 3-phosphate + an acyl-CoA = a 1-acyl-sn-glycero-3-phosphate + CoA. It catalyses the reaction a 1-acyl-sn-glycero-3-phosphate + an acyl-CoA = a 1,2-diacyl-sn-glycero-3-phosphate + CoA. It carries out the reaction dodecanoyl-CoA + sn-glycerol 3-phosphate = 1-dodecanoyl-sn-glycerol 3-phosphate + CoA. The enzyme catalyses sn-glycerol 3-phosphate + hexadecanoyl-CoA = 1-hexadecanoyl-sn-glycero-3-phosphate + CoA. The catalysed reaction is sn-glycerol 3-phosphate + (9Z)-octadecenoyl-CoA = 1-(9Z-octadecenoyl)-sn-glycero-3-phosphate + CoA. It catalyses the reaction (9Z,12Z)-octadecadienoyl-CoA + sn-glycerol 3-phosphate = 1-(9Z,12Z)-octadecadienoyl-sn-glycero-3-phosphate + CoA. It carries out the reaction 1-tetradecanoyl-sn-glycerol 3-phosphate + (9Z)-octadecenoyl-CoA = 1-tetradecanoyl-2-(9Z)-octadecenoyl-sn-glycero-3-phosphate + CoA. The enzyme catalyses 1-hexadecanoyl-sn-glycero-3-phosphate + (9Z)-octadecenoyl-CoA = 1-hexadecanoyl-2-(9Z-octadecenoyl)-sn-glycero-3-phosphate + CoA. The catalysed reaction is 1-(9Z-octadecenoyl)-sn-glycero-3-phosphate + (9Z)-octadecenoyl-CoA = 1,2-di-(9Z-octadecenoyl)-sn-glycero-3-phosphate + CoA. It catalyses the reaction 1-(6Z,9Z,12Z-octadecatrienoyl)-sn-glycero-3-phosphate + (9Z)-octadecenoyl-CoA = (6Z,9Z,12Z)-octadecatrienoyl-2-(9Z)-octadecenoyl-sn-glycero-3-phosphate + CoA. It carries out the reaction 1-(9Z,12Z,15Z)-octadecatrienoyl-sn-glycero-3-phosphate + (9Z)-octadecenoyl-CoA = 1-(9Z,12Z,15Z)-octadecatrienoyl-2-(9Z)-octadecenoyl-sn-glycero-3-phosphate + CoA. The enzyme catalyses 1-(9Z-octadecenoyl)-sn-glycero-3-phosphate + tetradecanoyl-CoA = 1-(9Z)-octadecenoyl-2-tetradecanoyl-sn-glycero-3-phosphate + CoA. The catalysed reaction is 1-(9Z-octadecenoyl)-sn-glycero-3-phosphate + hexadecanoyl-CoA = 1-(9Z)-octadecenoyl-2-hexadecanoyl-sn-glycero-3-phosphate + CoA. It catalyses the reaction 1-(9Z-octadecenoyl)-sn-glycero-3-phosphate + octadecanoyl-CoA = 1-(9Z-octadecenoyl)-2-octadecanoyl-sn-glycero-3-phosphate + CoA. It carries out the reaction 1-(9Z-octadecenoyl)-sn-glycero-3-phosphate + (9Z,12Z)-octadecadienoyl-CoA = 1-(9Z)-octadecenoyl-2-(9Z,12Z)-octadecadienoyl-sn-glycero-3-phosphate + CoA. The enzyme catalyses 1-(5Z,8Z,11Z,14Z-eicosatetraenoyl)-sn-glycero-3-phosphate + (9Z)-octadecenoyl-CoA = 1-(5Z,8Z,11Z,14Z)-eicosatetraenoyl-2-(9Z)-octadecenoyl-sn-glycero-3-phosphate + CoA. The protein operates within glycerolipid metabolism; triacylglycerol biosynthesis. It participates in phospholipid metabolism; CDP-diacylglycerol biosynthesis; CDP-diacylglycerol from sn-glycerol 3-phosphate: step 1/3. In terms of biological role, converts glycerol-3-phosphate to 1-acyl-sn-glycerol-3-phosphate (lysophosphatidic acid or LPA) by incorporating an acyl moiety at the sn-1 position of the glycerol backbone. Also converts LPA into 1,2-diacyl-sn-glycerol-3-phosphate (phosphatidic acid or PA) by incorporating an acyl moiety at the sn-2 position of the glycerol backbone. Protects cells against lipotoxicity. The polypeptide is Glycerol-3-phosphate acyltransferase 3 (Rattus norvegicus (Rat)).